The sequence spans 191 residues: Orotate phosphoribosyltransferase (191 aa).

116 to 124 contributes to the 5-phospho-alpha-D-ribose 1-diphosphate binding site; sequence EDVVTTGGS. 2 residues coordinate orotate: Thr-120 and Arg-148.

This sequence belongs to the purine/pyrimidine phosphoribosyltransferase family. PyrE subfamily. Homodimer. Requires Mg(2+) as cofactor.

It carries out the reaction orotidine 5'-phosphate + diphosphate = orotate + 5-phospho-alpha-D-ribose 1-diphosphate. It participates in pyrimidine metabolism; UMP biosynthesis via de novo pathway; UMP from orotate: step 1/2. Catalyzes the transfer of a ribosyl phosphate group from 5-phosphoribose 1-diphosphate to orotate, leading to the formation of orotidine monophosphate (OMP). This Heliobacterium modesticaldum (strain ATCC 51547 / Ice1) protein is Orotate phosphoribosyltransferase.